Reading from the N-terminus, the 213-residue chain is Large ribosomal subunit protein uL3 (213 aa).

Q151 is subject to N5-methylglutamine.

Belongs to the universal ribosomal protein uL3 family. In terms of assembly, part of the 50S ribosomal subunit. Forms a cluster with proteins L14 and L19. Post-translationally, methylated by PrmB.

In terms of biological role, one of the primary rRNA binding proteins, it binds directly near the 3'-end of the 23S rRNA, where it nucleates assembly of the 50S subunit. This Allorhizobium ampelinum (strain ATCC BAA-846 / DSM 112012 / S4) (Agrobacterium vitis (strain S4)) protein is Large ribosomal subunit protein uL3.